A 966-amino-acid polypeptide reads, in one-letter code: Aminopeptidase N (966 aa).

At M1–S8 the chain is on the cytoplasmic side. Residues K9–V32 form a helical; Signal-anchor for type II membrane protein membrane-spanning segment. The cytosolic Ser/Thr-rich junction stretch occupies residues Y33–N65. The Extracellular portion of the chain corresponds to Y33–A966. N40 and N125 each carry an N-linked (GlcNAc...) asparagine glycan. The disordered stretch occupies residues N40 to T61. Positions L66–A966 are metalloprotease. At Y173 the chain carries Sulfotyrosine. N-linked (GlcNAc...) asparagine glycosylation is found at N259 and N315. A substrate-binding site is contributed by G348–N352. H384 provides a ligand contact to Zn(2+). The Proton acceptor role is filled by E385. Residues H388 and E407 each coordinate Zn(2+). Sulfotyrosine is present on residues Y415 and Y420. 4 N-linked (GlcNAc...) asparagine glycosylation sites follow: N552, N570, N624, and N734. Cystine bridges form between C760/C767 and C797/C833. The N-linked (GlcNAc...) asparagine glycan is linked to N817. Phosphotyrosine is present on Y852. Y912 carries the post-translational modification Sulfotyrosine.

This sequence belongs to the peptidase M1 family. As to quaternary structure, homodimer. Interacts with SLC6A19. Zn(2+) is required as a cofactor. Sulfated. In terms of processing, N- and O-glycosylated. Post-translationally, may undergo proteolysis and give rise to a soluble form.

The protein resides in the cell membrane. It carries out the reaction Release of an N-terminal amino acid, Xaa-|-Yaa- from a peptide, amide or arylamide. Xaa is preferably Ala, but may be most amino acids including Pro (slow action). When a terminal hydrophobic residue is followed by a prolyl residue, the two may be released as an intact Xaa-Pro dipeptide.. Functionally, broad specificity aminopeptidase which plays a role in the final digestion of peptides generated from hydrolysis of proteins by gastric and pancreatic proteases. Also involved in the processing of various peptides including peptide hormones, such as angiotensin III and IV, neuropeptides, and chemokines. May also be involved the cleavage of peptides bound to major histocompatibility complex class II molecules of antigen presenting cells. May have a role in angiogenesis and promote cholesterol crystallization. May have a role in amino acid transport by acting as binding partner of amino acid transporter SLC6A19 and regulating its activity. This chain is Aminopeptidase N (ANPEP), found in Oryctolagus cuniculus (Rabbit).